A 360-amino-acid chain; its full sequence is Phospho-N-acetylmuramoyl-pentapeptide-transferase (360 aa).

The next 10 membrane-spanning stretches (helical) occupy residues 26–46 (AIVS…RMIA), 72–92 (PTMG…LWAY), 94–114 (SNPY…IGFV), 132–152 (WKYF…YLAG), 168–188 (VMPQ…VGTG), 199–219 (GLAI…AWAT), 236–256 (AGEL…FLWF), 263–283 (VFMG…IAVL), 288–308 (FLLV…ILQV), and 338–358 (VIVR…ATLK).

It belongs to the glycosyltransferase 4 family. MraY subfamily. Mg(2+) is required as a cofactor.

The protein resides in the cell inner membrane. It catalyses the reaction UDP-N-acetyl-alpha-D-muramoyl-L-alanyl-gamma-D-glutamyl-meso-2,6-diaminopimeloyl-D-alanyl-D-alanine + di-trans,octa-cis-undecaprenyl phosphate = di-trans,octa-cis-undecaprenyl diphospho-N-acetyl-alpha-D-muramoyl-L-alanyl-D-glutamyl-meso-2,6-diaminopimeloyl-D-alanyl-D-alanine + UMP. Its pathway is cell wall biogenesis; peptidoglycan biosynthesis. Its function is as follows. Catalyzes the initial step of the lipid cycle reactions in the biosynthesis of the cell wall peptidoglycan: transfers peptidoglycan precursor phospho-MurNAc-pentapeptide from UDP-MurNAc-pentapeptide onto the lipid carrier undecaprenyl phosphate, yielding undecaprenyl-pyrophosphoryl-MurNAc-pentapeptide, known as lipid I. The polypeptide is Phospho-N-acetylmuramoyl-pentapeptide-transferase (Citrobacter koseri (strain ATCC BAA-895 / CDC 4225-83 / SGSC4696)).